Consider the following 132-residue polypeptide: MSVNDPIADMLTRIRNACMARHATVSIPSSKMKLAIAQILKREGFIQDFTVQEGKPYSTIVITLKYTPDRRPVITGLKRVSKPGLRIYTKRADIPRVRGGLGLSILSTPRGVMAGHEAWQQRVGGEVLCYVW.

This sequence belongs to the universal ribosomal protein uS8 family. In terms of assembly, part of the 30S ribosomal subunit. Contacts proteins S5 and S12.

One of the primary rRNA binding proteins, it binds directly to 16S rRNA central domain where it helps coordinate assembly of the platform of the 30S subunit. The polypeptide is Small ribosomal subunit protein uS8 (Roseiflexus castenholzii (strain DSM 13941 / HLO8)).